A 384-amino-acid chain; its full sequence is DNA repair protein RAD51 homolog 2 (384 aa).

An interaction with RAD51C region spans residues 1–75 (MGSKKLKRVG…TAYGIKAQRS (75 aa)). An ATP-binding site is contributed by 108 to 115 (GPPGCGKT).

This sequence belongs to the RecA family. RAD51 subfamily. Part of the BCDX2 complex consisting of RAD51B, RAD51C, RAD51D and XRCC2; the complex has a ring-like structure arranged into a flat disc around a central channel. The BCDX2 subcomplex RAD51B:RAD51C interacts with RAD51. Interacts with SWSAP1; involved in homologous recombination repair. Interacts with HELQ. Phosphorylated on tyrosine residues by BCR-ABL. In terms of tissue distribution, expressed in a wide range of tissues.

It localises to the nucleus. Functionally, involved in the homologous recombination repair (HRR) pathway of double-stranded DNA breaks arising during DNA replication or induced by DNA-damaging agents. May promote the assembly of presynaptic RAD51 nucleoprotein filaments. Binds single-stranded DNA and double-stranded DNA and has DNA-dependent ATPase activity. Part of the RAD51 paralog protein complex BCDX2 which acts in the BRCA1-BRCA2-dependent HR pathway. Upon DNA damage, BCDX2 acts downstream of BRCA2 recruitment and upstream of RAD51 recruitment. BCDX2 binds predominantly to the intersection of the four duplex arms of the Holliday junction and to junction of replication forks. The BCDX2 complex was originally reported to bind single-stranded DNA, single-stranded gaps in duplex DNA and specifically to nicks in duplex DNA. The BCDX2 subcomplex RAD51B:RAD51C exhibits single-stranded DNA-dependent ATPase activity suggesting an involvement in early stages of the HR pathway. In Homo sapiens (Human), this protein is DNA repair protein RAD51 homolog 2 (RAD51B).